The sequence spans 654 residues: tRNA 5-methylaminomethyl-2-thiouridine biosynthesis bifunctional protein MnmC (654 aa).

Residues 1–236 (MPTLLQHAQI…KWEVMSGAYV (236 aa)) are tRNA (mnm(5)s(2)U34)-methyltransferase. Residues 262 to 654 (IGAGLAGSSS…FGLRRLIRGK (393 aa)) are FAD-dependent cmnm(5)s(2)U34 oxidoreductase.

The protein in the N-terminal section; belongs to the methyltransferase superfamily. tRNA (mnm(5)s(2)U34)-methyltransferase family. It in the C-terminal section; belongs to the DAO family. FAD serves as cofactor.

Its subcellular location is the cytoplasm. The enzyme catalyses 5-aminomethyl-2-thiouridine(34) in tRNA + S-adenosyl-L-methionine = 5-methylaminomethyl-2-thiouridine(34) in tRNA + S-adenosyl-L-homocysteine + H(+). Functionally, catalyzes the last two steps in the biosynthesis of 5-methylaminomethyl-2-thiouridine (mnm(5)s(2)U) at the wobble position (U34) in tRNA. Catalyzes the FAD-dependent demodification of cmnm(5)s(2)U34 to nm(5)s(2)U34, followed by the transfer of a methyl group from S-adenosyl-L-methionine to nm(5)s(2)U34, to form mnm(5)s(2)U34. This chain is tRNA 5-methylaminomethyl-2-thiouridine biosynthesis bifunctional protein MnmC, found in Pseudomonas putida (strain ATCC 47054 / DSM 6125 / CFBP 8728 / NCIMB 11950 / KT2440).